Consider the following 357-residue polypeptide: Gas vesicle ATPase GvpN (357 aa).

Polar residues predominate over residues 22-36 (ATSASKNGGRTTPSA). Residues 22–43 (ATSASKNGGRTTPSALTPRPRS) are disordered. An ATP-binding site is contributed by 72–79 (GPAGTGKT).

The protein belongs to the CbbQ/NirQ/NorQ/GpvN family. In terms of assembly, forms homodimers, probably interacts with other GV proteins including GvpA.

It is found in the gas vesicle. The protein resides in the cytoplasm. The catalysed reaction is ATP + H2O = ADP + phosphate + H(+). An ATPase that functions in gas vesicle formation. A minor component of the gas vesicle, also found in soluble extracts. Gas vesicles (GV) are hollow, gas filled proteinaceous nanostructures. During planktonic growth they allow positioning of the organism at a favorable depth for light or nutrient acquisition. The polypeptide is Gas vesicle ATPase GvpN (Ancylobacter aquaticus).